We begin with the raw amino-acid sequence, 210 residues long: Glutathione S-transferase mdpJ (210 aa).

One can recognise a GST N-terminal domain in the interval 2–83 (SFGTLYTHNP…YCNDERSSLR (82 aa)). Residues 77–200 (DERSSLRILQ…VAGGVPDLGL (124 aa)) enclose the GST C-terminal domain.

Belongs to the GST superfamily.

It participates in secondary metabolite biosynthesis. Glutathione S-transferase; part of the gene cluster that mediates the biosynthesis of monodictyphenone, a prenyl xanthone derivative. The pathway begins with the synthesis of atrochrysone thioester by the polyketide synthase (PKS) mdpG. The atrochrysone carboxyl ACP thioesterase mdpF then breaks the thioester bond and releases the atrochrysone carboxylic acid from mdpG. The atrochrysone carboxylic acid is then converted to atrochrysone which is further transformed into emodin anthrone. The next step is performed by the anthrone oxygenase mdpH that catalyzes the oxidation of emodinanthrone to emodin. Emodin is further modified to yield monodictyphenone via several steps involving mdpB, mdpC mdpJ, mdpK and mdpL. These enzymes with xptA, xptB and xptC are also proposed to be involved in the synthesis of shamixanthone from emodin. Especially, direct reduction of emodin by the short chain dehydrogenase mdpC followed by dehydration catalyzed by the scytalone dehydratase-like protein mdpB gives loss of oxygen and formation of chrysophanol intermediate in two simple steps. This chain is Glutathione S-transferase mdpJ, found in Emericella nidulans (strain FGSC A4 / ATCC 38163 / CBS 112.46 / NRRL 194 / M139) (Aspergillus nidulans).